The sequence spans 310 residues: MPEELSKKQITRLNKLQKRLRREVGSAIADYNMIEDGDRVMCCLSGGKDSYAMLDILLNLQQRAPVQFEIIAVNLDQKQPGFPEHVLPAYLDSLNIPYHILEKDTYSIVKEKIPEGKTTCSLCSRLRRGTLYGFAQRIGATKIALGHHRDDIIETMFLNMFYGGKMKAMPPKLLSDDGANVVIRPLAYCREKDLEEYAELKKFPIIPCNLCGSQENLKRQAVKDMLNQWDRLYPGRIETIFTAMQNTAPSQGVDREQFDFVSLKRDPNAPMKGDVAEADLPAFDFLDIANSGHIDLDAAKRINIVNVYEA.

Residues 45 to 50 (SGGKDS) carry the PP-loop motif motif. [4Fe-4S] cluster is bound by residues Cys120, Cys123, and Cys211.

The protein belongs to the TtcA family. In terms of assembly, homodimer. Mg(2+) is required as a cofactor. It depends on [4Fe-4S] cluster as a cofactor.

The protein localises to the cytoplasm. It carries out the reaction cytidine(32) in tRNA + S-sulfanyl-L-cysteinyl-[cysteine desulfurase] + AH2 + ATP = 2-thiocytidine(32) in tRNA + L-cysteinyl-[cysteine desulfurase] + A + AMP + diphosphate + H(+). It functions in the pathway tRNA modification. Its function is as follows. Catalyzes the ATP-dependent 2-thiolation of cytidine in position 32 of tRNA, to form 2-thiocytidine (s(2)C32). The sulfur atoms are provided by the cysteine/cysteine desulfurase (IscS) system. The sequence is that of tRNA-cytidine(32) 2-sulfurtransferase from Shewanella sp. (strain ANA-3).